Here is a 496-residue protein sequence, read N- to C-terminus: Ribose import ATP-binding protein RbsA (496 aa).

2 ABC transporter domains span residues 5–242 (IEMK…VGRS) and 252–496 (SQIG…TGGE). 37–44 (GENGAGKS) lines the ATP pocket.

It belongs to the ABC transporter superfamily. Ribose importer (TC 3.A.1.2.1) family. In terms of assembly, the complex is composed of an ATP-binding protein (RbsA), two transmembrane proteins (RbsC) and a solute-binding protein (RbsB).

It localises to the cell membrane. The enzyme catalyses D-ribose(out) + ATP + H2O = D-ribose(in) + ADP + phosphate + H(+). Its function is as follows. Part of the ABC transporter complex RbsABC involved in ribose import. Responsible for energy coupling to the transport system. This Bacillus cereus (strain ATCC 14579 / DSM 31 / CCUG 7414 / JCM 2152 / NBRC 15305 / NCIMB 9373 / NCTC 2599 / NRRL B-3711) protein is Ribose import ATP-binding protein RbsA.